The chain runs to 1005 residues: Retinoblastoma-related protein (1005 aa).

A domain A region spans residues threonine 404–leucine 605. A pocket region spans residues threonine 404–proline 853. The spacer stretch occupies residues threonine 606–glutamate 722. The segment at threonine 723 to proline 853 is domain B. Residues valine 863–glutamate 873 show a composition bias toward polar residues. The disordered stretch occupies residues valine 863–aspartate 899.

The protein belongs to the retinoblastoma protein (RB) family.

Its subcellular location is the nucleus. Regulator of biological processes that recruits a histone deacetylase to control gene transcription. May play a role in the entry into mitosis, negatively regulating the cell proliferation. Formation of stable complexes with geminiviridae replication-associated proteins may create a cellular environment which favors viral DNA replication. This Pilosella piloselloides (Glaucous king-devil hawkweed) protein is Retinoblastoma-related protein (RBR).